The sequence spans 500 residues: 4-aminobutyrate aminotransferase, mitochondrial (500 aa).

A mitochondrion-targeting transit peptide spans 1–28 (MAFLLITRRLACSSQKNLHLFIPGSRYI). Cys-163 provides a ligand contact to [2Fe-2S] cluster. A pyridoxal 5'-phosphate-binding site is contributed by 164 to 165 (GS). Cys-166 serves as a coordination point for [2Fe-2S] cluster. Arg-220 serves as a coordination point for substrate. Lys-231 carries the post-translational modification N6-succinyllysine. An N6-acetyllysine; alternate modification is found at Lys-252. Residue Lys-252 is modified to N6-succinyllysine; alternate. N6-acetyllysine occurs at positions 279 and 318. Lys-357 is subject to N6-(pyridoxal phosphate)lysine. Position 381 (Thr-381) interacts with pyridoxal 5'-phosphate. N6-acetyllysine; alternate is present on Lys-413. The residue at position 413 (Lys-413) is an N6-succinyllysine; alternate. N6-acetyllysine is present on residues Lys-452 and Lys-470.

It belongs to the class-III pyridoxal-phosphate-dependent aminotransferase family. Homodimer; disulfide-linked. The cofactor is pyridoxal 5'-phosphate. It depends on [2Fe-2S] cluster as a cofactor.

The protein resides in the mitochondrion matrix. The catalysed reaction is 4-aminobutanoate + 2-oxoglutarate = succinate semialdehyde + L-glutamate. It catalyses the reaction (S)-3-amino-2-methylpropanoate + 2-oxoglutarate = 2-methyl-3-oxopropanoate + L-glutamate. In terms of biological role, catalyzes the conversion of gamma-aminobutyrate and L-beta-aminoisobutyrate to succinate semialdehyde and methylmalonate semialdehyde, respectively. Can also convert delta-aminovalerate and beta-alanine. The protein is 4-aminobutyrate aminotransferase, mitochondrial of Mus musculus (Mouse).